The chain runs to 550 residues: Glypican-1 (550 aa).

The signal sequence occupies residues 1–20 (MRFFPWGFWLLCVASAPARG). Disulfide bonds link Cys-29-Cys-65, Cys-59-Cys-253, Cys-66-Cys-256, Cys-188-Cys-340, Cys-243-Cys-276, Cys-265-Cys-412, and Cys-269-Cys-398. 2 N-linked (GlcNAc...) asparagine glycosylation sites follow: Asn-76 and Asn-113. N-linked (GlcNAc...) asparagine glycosylation is present at Asn-382. Disordered regions lie at residues 475-494 (FQDA…CPDD) and 502-522 (KSPS…GHGV). A compositionally biased stretch (low complexity) spans 481–494 (DMSGSGSGDSCPDD). Ser-483, Ser-485, and Ser-487 each carry an O-linked (Xyl...) (heparan sulfate) serine glycan. Residue Gly-524 is the site of GPI-anchor amidated glycine attachment. The propeptide at 525-550 (ASSRSLPSAFLLFLSGASIVVQHLWR) is removed in mature form.

This sequence belongs to the glypican family. Post-translationally, O-glycosylated with heparan sulfate.

Its subcellular location is the cell membrane. It is found in the endosome. The protein resides in the secreted. It localises to the extracellular space. In terms of biological role, cell surface proteoglycan that bears heparan sulfate. Modulates Wnt-signaling pathway. In Gallus gallus (Chicken), this protein is Glypican-1 (GPC1).